We begin with the raw amino-acid sequence, 726 residues long: MPRRKKKIKEASEGQNLEKKDLETTSSVSIKKKRRLEDLFIVISDSDGEETKEENGLQKMKTKQSNRSKCLAKRKIAQMSEEEQFALALKMSEQEAKEVNNQEEKEEELLRKAIAESLNSRWSSDASAARPRPLSTGPSSHPHQDSTKDSGTTEGIWQLAPPSLCKGSQISQGNEAEEGKEPWDHSENPEEEPLSGSSGSQDQSSRPVFENEKVKCFDRCTGHLAEHTQCGKPQESTGSGCAFPKAVQGRGDTSRQCLPTPADTKGLQDIGGTVHYYWGVPFCPAGVDPDQYTSVILCQLEVYQKSLKMAQRQLVKKRGFGEPVLPRPPFLIQNECGQEEQTSEKHEGLSEDVRAGAREERQGSGASVWHSETKDSQKSPITSLKQRLLLEEEPTTGRGQSSQGLFVEETSEEVLKSSEGDDAVPASQSIAVLTSKRDLVLMPEASTEEVTVCPETQLSSFEPLDLNGEDSVDGREIPTELGMTVSNRQVDNREAGKDSRPPAVSASARVSCPLCNQDFPPTKIEQHAMYCTGLMEPETVLTRRRREAKKKSDGRTAAQPALDISRKEKCYLCKSLVPLGEYQCHVETCLQLANVDRENGTEGMRRPRVCAPVEGKPKQRLRKSKEKGHSQGRLLSLLEQSEHRTTGVERTPKCSEAGAFRMPSPDVEEAGCSRERQSSLSKLNLNESPIKSFVPVSEATNCLVDFKGQFAFRSQTKSGRGRRRKS.

The tract at residues 1-27 (MPRRKKKIKEASEGQNLEKKDLETTSS) is disordered. The tract at residues 1–101 (MPRRKKKIKE…SEQEAKEVNN (101 aa)) is necessary for transcriptional repression. Positions 9–23 (KEASEGQNLEKKDLE) are enriched in basic and acidic residues. Lysine 20 participates in a covalent cross-link: Glycyl lysine isopeptide (Lys-Gly) (interchain with G-Cter in SUMO2). The residue at position 29 (serine 29) is a Phosphoserine. Residue lysine 31 forms a Glycyl lysine isopeptide (Lys-Gly) (interchain with G-Cter in SUMO2) linkage. Phosphoserine is present on residues serine 44 and serine 46. Residues 47–67 (DGEETKEENGLQKMKTKQSNR) form a disordered region. Threonine 51 bears the Phosphothreonine mark. The LR motif signature appears at 60–78 (MKTKQSNRSKCLAKRKIAQ). Residues lysine 75 and lysine 90 each participate in a glycyl lysine isopeptide (Lys-Gly) (interchain with G-Cter in SUMO2) cross-link. 2 UIM domains span residues 80–99 (SEEEQFALALKMSEQEAKEV) and 104–124 (EKEEELLRKAIAESLNSRWSS). Disordered stretches follow at residues 93 to 112 (EQEAKEVNNQEEKEEELLRK) and 119 to 208 (NSRW…SRPV). The tract at residues 97 to 103 (KEVNNQE) is UIM-linker. Residues 100 to 200 (NNQEEKEEEL…EEPLSGSSGS (101 aa)) form a necessary for interaction with NR6A1 N-terminus region. Serine 140 carries the phosphoserine modification. A compositionally biased stretch (basic and acidic residues) spans 177–188 (EEGKEPWDHSEN). The span at 194 to 205 (LSGSSGSQDQSS) shows a compositional bias: low complexity. At serine 205 the chain carries Phosphoserine. Lysine 245 participates in a covalent cross-link: Glycyl lysine isopeptide (Lys-Gly) (interchain with G-Cter in SUMO2). Positions 270–400 (IGGTVHYYWG…EEEPTTGRGQ (131 aa)) are AIR. The tract at residues 356–411 (GAREERQGSGASVWHSETKDSQKSPITSLKQRLLLEEEPTTGRGQSSQGLFVEETS) is disordered. Serine 379, serine 402, and serine 427 each carry phosphoserine. The interval 400 to 507 (QSSQGLFVEE…DSRPPAVSAS (108 aa)) is necessary for interaction with NR6A1 C-terminus. Lysine 436 participates in a covalent cross-link: Glycyl lysine isopeptide (Lys-Gly) (interchain with G-Cter in SUMO2). Residues 509 to 536 (RVSCPLCNQDFPPTKIEQHAMYCTGLME) form a UBZ4-type zinc finger. Residues cysteine 512, cysteine 515, histidine 527, and cysteine 531 each contribute to the Zn(2+) site. The interval 512–589 (CPLCNQDFPP…GEYQCHVETC (78 aa)) is zinc-finger-like region. Residues lysine 551, lysine 569, and lysine 616 each participate in a glycyl lysine isopeptide (Lys-Gly) (interchain with G-Cter in SUMO2) cross-link. The interval 611–675 (APVEGKPKQR…DVEEAGCSRE (65 aa)) is disordered. Serine 636 carries the phosphoserine modification. The segment covering 640–653 (QSEHRTTGVERTPK) has biased composition (basic and acidic residues). A phosphoserine mark is found at serine 664 and serine 688. A Glycyl lysine isopeptide (Lys-Gly) (interchain with G-Cter in SUMO2) cross-link involves residue lysine 707.

The protein belongs to the RAP80 family. Component of the ARISC complex, at least composed of UIMC1/RAP80, ABRAXAS1, BRCC3/BRCC36, BABAM2 and BABAM1/NBA1. Component of the BRCA1-A complex, at least composed of the BRCA1, BARD1, UIMC1/RAP80, ABRAXAS1, BRCC3/BRCC36, BABAM2 and BABAM1/NBA1. In the BRCA1-A complex, interacts directly with ABRAXAS1. Interacts with UBE2I. Interacts with NR6A1. Interacts with ESR1. Interacts with TSP57. Interacts with TRAIP. Sumoylated. In terms of processing, phosphorylated upon DNA damage by ATM or ATR.

Its subcellular location is the nucleus. Its function is as follows. Ubiquitin-binding protein. Specifically recognizes and binds 'Lys-63'-linked ubiquitin. Plays a central role in the BRCA1-A complex by specifically binding 'Lys-63'-linked ubiquitinated histones H2A and H2AX at DNA lesions sites, leading to target the BRCA1-BARD1 heterodimer to sites of DNA damage at double-strand breaks (DSBs). The BRCA1-A complex also possesses deubiquitinase activity that specifically removes 'Lys-63'-linked ubiquitin on histones H2A and H2AX. Also weakly binds monoubiquitin but with much less affinity than 'Lys-63'-linked ubiquitin. May interact with monoubiquitinated histones H2A and H2B; the relevance of such results is however unclear in vivo. Does not bind Lys-48'-linked ubiquitin. May indirectly act as a transcriptional repressor by inhibiting the interaction of NR6A1 with the corepressor NCOR1. This Rattus norvegicus (Rat) protein is BRCA1-A complex subunit RAP80 (Uimc1).